The chain runs to 374 residues: Anhydro-N-acetylmuramic acid kinase (374 aa).

12-19 (GTSLDGVD) lines the ATP pocket.

Belongs to the anhydro-N-acetylmuramic acid kinase family.

The enzyme catalyses 1,6-anhydro-N-acetyl-beta-muramate + ATP + H2O = N-acetyl-D-muramate 6-phosphate + ADP + H(+). Its pathway is amino-sugar metabolism; 1,6-anhydro-N-acetylmuramate degradation. It participates in cell wall biogenesis; peptidoglycan recycling. In terms of biological role, catalyzes the specific phosphorylation of 1,6-anhydro-N-acetylmuramic acid (anhMurNAc) with the simultaneous cleavage of the 1,6-anhydro ring, generating MurNAc-6-P. Is required for the utilization of anhMurNAc either imported from the medium or derived from its own cell wall murein, and thus plays a role in cell wall recycling. The chain is Anhydro-N-acetylmuramic acid kinase from Enterobacter sp. (strain 638).